Here is a 135-residue protein sequence, read N- to C-terminus: Peptide methionine sulfoxide reductase MsrB (135 aa).

Residues 13–135 form the MsrB domain; that stretch reads DADWREQLTP…NGHSMVFEPV (123 aa). 4 residues coordinate Zn(2+): C52, C55, C101, and C104. Residue C124 is the Nucleophile of the active site.

It belongs to the MsrB Met sulfoxide reductase family. Requires Zn(2+) as cofactor.

It carries out the reaction L-methionyl-[protein] + [thioredoxin]-disulfide + H2O = L-methionyl-(R)-S-oxide-[protein] + [thioredoxin]-dithiol. The sequence is that of Peptide methionine sulfoxide reductase MsrB from Agrobacterium fabrum (strain C58 / ATCC 33970) (Agrobacterium tumefaciens (strain C58)).